Consider the following 269-residue polypeptide: 5'-nucleotidase SurE (269 aa).

4 residues coordinate a divalent metal cation: Asp11, Asp12, Ser43, and Asn101.

It belongs to the SurE nucleotidase family. It depends on a divalent metal cation as a cofactor.

Its subcellular location is the cytoplasm. It carries out the reaction a ribonucleoside 5'-phosphate + H2O = a ribonucleoside + phosphate. Nucleotidase that shows phosphatase activity on nucleoside 5'-monophosphates. This Prochlorococcus marinus (strain AS9601) protein is 5'-nucleotidase SurE.